Reading from the N-terminus, the 537-residue chain is 6-phosphogluconate dehydrogenase, decarboxylating 2, chloroplastic (537 aa).

Residues 1–44 (MRSEVPSSTSPSFLSPPFIHLPLLSLSSPTPLPHSSSSTFSLFS) constitute a chloroplast transit peptide. NADP(+) is bound by residues 55-60 (GLAVMG), 78-80 (NRT), 122-124 (VKA), and asparagine 150. Residues asparagine 150 and 176–178 (SGG) each bind substrate. Lysine 230 serves as the catalytic Proton acceptor. Residue 233 to 234 (HN) coordinates substrate. Glutamate 237 acts as the Proton donor in catalysis. 5 residues coordinate substrate: tyrosine 238, lysine 308, arginine 335, arginine 500, and histidine 506.

It belongs to the 6-phosphogluconate dehydrogenase family. As to quaternary structure, homodimer.

It localises to the plastid. The protein resides in the chloroplast. The enzyme catalyses 6-phospho-D-gluconate + NADP(+) = D-ribulose 5-phosphate + CO2 + NADPH. It participates in carbohydrate degradation; pentose phosphate pathway; D-ribulose 5-phosphate from D-glucose 6-phosphate (oxidative stage): step 3/3. Its function is as follows. Catalyzes the oxidative decarboxylation of 6-phosphogluconate to ribulose 5-phosphate and CO(2), with concomitant reduction of NADP to NADPH. The sequence is that of 6-phosphogluconate dehydrogenase, decarboxylating 2, chloroplastic from Spinacia oleracea (Spinach).